The sequence spans 294 residues: Diaminopimelate epimerase (294 aa).

Asn11 and Asn78 together coordinate substrate. The active-site Proton donor is the Cys87. Substrate contacts are provided by residues 88–89 (GN), Asn167, Asn203, and 221–222 (ER). Cys230 serves as the catalytic Proton acceptor. 231–232 (GT) is a substrate binding site.

This sequence belongs to the diaminopimelate epimerase family. Homodimer.

The protein localises to the cytoplasm. It carries out the reaction (2S,6S)-2,6-diaminopimelate = meso-2,6-diaminopimelate. It functions in the pathway amino-acid biosynthesis; L-lysine biosynthesis via DAP pathway; DL-2,6-diaminopimelate from LL-2,6-diaminopimelate: step 1/1. Its function is as follows. Catalyzes the stereoinversion of LL-2,6-diaminopimelate (L,L-DAP) to meso-diaminopimelate (meso-DAP), a precursor of L-lysine and an essential component of the bacterial peptidoglycan. The chain is Diaminopimelate epimerase from Mycobacterium avium (strain 104).